The following is a 65-amino-acid chain: uncharacterized protein (65 aa).

The signal sequence occupies residues 1-16; it reads MMHVCSLLVSFDVVKS.

This is an uncharacterized protein from Saccharomyces cerevisiae (strain ATCC 204508 / S288c) (Baker's yeast).